Reading from the N-terminus, the 79-residue chain is Three-finger toxin A2 (79 aa).

A signal peptide spans 1 to 21; the sequence is MKTLLLTLVVVTIVCLDLGNS. 4 cysteine pairs are disulfide-bonded: Cys-24–Cys-41, Cys-34–Cys-59, Cys-63–Cys-71, and Cys-72–Cys-77.

It belongs to the three-finger toxin family. Short-chain subfamily. As to expression, expressed by the venom gland.

It is found in the secreted. The chain is Three-finger toxin A2 from Micrurus laticollaris (Balsas coral snake).